The chain runs to 842 residues: Glycogen phosphorylase, muscle form (842 aa).

The residue at position 2 (Ser-2) is an N-acetylserine. A Phosphoserine; by PHK; in form phosphorylase A modification is found at Ser-15. The AMP site is built by Asp-43 and Tyr-76. Phosphotyrosine is present on residues Tyr-204 and Tyr-227. Position 310–319 (310–319) interacts with AMP; the sequence is RRFKSSKFGS. Residue Ser-430 is modified to Phosphoserine. Tyr-473 bears the Phosphotyrosine mark. Position 514 is a phosphoserine (Ser-514). The residue at position 681 (Lys-681) is an N6-(pyridoxal phosphate)lysine. 2 positions are modified to phosphoserine: Ser-747 and Ser-748.

It belongs to the glycogen phosphorylase family. In terms of assembly, homodimer. Homotetramer; to form the enzymatically active phosphorylase A. It depends on pyridoxal 5'-phosphate as a cofactor. In terms of processing, phosphorylation of Ser-15 converts phosphorylase B (unphosphorylated) to phosphorylase A.

The enzyme catalyses [(1-&gt;4)-alpha-D-glucosyl](n) + phosphate = [(1-&gt;4)-alpha-D-glucosyl](n-1) + alpha-D-glucose 1-phosphate. Allosterically regulated through the non-covalent binding of metabolites, being activated by AMP and inhibited by ATP, ADP, and glucose-6-phosphate. The activity is also controlled by post-translational modifications including phosphorylation. Allosteric enzyme that catalyzes the rate-limiting step in glycogen catabolism, the phosphorolytic cleavage of glycogen to produce glucose-1-phosphate, and plays a central role in maintaining cellular and organismal glucose homeostasis. The chain is Glycogen phosphorylase, muscle form from Mus musculus (Mouse).